The following is a 462-amino-acid chain: Glutamate--tRNA ligase 1 (462 aa).

The 'HIGH' region signature appears at P8 to G18. Positions K237–R241 match the 'KMSKS' region motif. K240 serves as a coordination point for ATP.

It belongs to the class-I aminoacyl-tRNA synthetase family. Glutamate--tRNA ligase type 1 subfamily. Monomer.

The protein resides in the cytoplasm. It carries out the reaction tRNA(Glu) + L-glutamate + ATP = L-glutamyl-tRNA(Glu) + AMP + diphosphate. Functionally, catalyzes the attachment of glutamate to tRNA(Glu) in a two-step reaction: glutamate is first activated by ATP to form Glu-AMP and then transferred to the acceptor end of tRNA(Glu). In Campylobacter hominis (strain ATCC BAA-381 / DSM 21671 / CCUG 45161 / LMG 19568 / NCTC 13146 / CH001A), this protein is Glutamate--tRNA ligase 1.